The primary structure comprises 378 residues: Phosphoserine aminotransferase (378 aa).

Position 53 (Arg53) interacts with L-glutamate. Pyridoxal 5'-phosphate-binding residues include Trp117, Thr167, Asp190, and Gln213. Position 214 is an N6-(pyridoxal phosphate)lysine (Lys214). Position 255-256 (255-256) interacts with pyridoxal 5'-phosphate; the sequence is NT.

The protein belongs to the class-V pyridoxal-phosphate-dependent aminotransferase family. SerC subfamily. As to quaternary structure, homodimer. Requires pyridoxal 5'-phosphate as cofactor.

It is found in the cytoplasm. It carries out the reaction O-phospho-L-serine + 2-oxoglutarate = 3-phosphooxypyruvate + L-glutamate. The catalysed reaction is 4-(phosphooxy)-L-threonine + 2-oxoglutarate = (R)-3-hydroxy-2-oxo-4-phosphooxybutanoate + L-glutamate. The protein operates within amino-acid biosynthesis; L-serine biosynthesis; L-serine from 3-phospho-D-glycerate: step 2/3. Its pathway is cofactor biosynthesis; pyridoxine 5'-phosphate biosynthesis; pyridoxine 5'-phosphate from D-erythrose 4-phosphate: step 3/5. Catalyzes the reversible conversion of 3-phosphohydroxypyruvate to phosphoserine and of 3-hydroxy-2-oxo-4-phosphonooxybutanoate to phosphohydroxythreonine. The protein is Phosphoserine aminotransferase of Ralstonia nicotianae (strain ATCC BAA-1114 / GMI1000) (Ralstonia solanacearum).